Here is a 574-residue protein sequence, read N- to C-terminus: Isocitrate dehydrogenase kinase/phosphatase (574 aa).

Residues 315–321 (APGIRGM) and K336 each bind ATP. D371 is an active-site residue.

It belongs to the AceK family.

Its subcellular location is the cytoplasm. It carries out the reaction L-seryl-[isocitrate dehydrogenase] + ATP = O-phospho-L-seryl-[isocitrate dehydrogenase] + ADP + H(+). In terms of biological role, bifunctional enzyme which can phosphorylate or dephosphorylate isocitrate dehydrogenase (IDH) on a specific serine residue. This is a regulatory mechanism which enables bacteria to bypass the Krebs cycle via the glyoxylate shunt in response to the source of carbon. When bacteria are grown on glucose, IDH is fully active and unphosphorylated, but when grown on acetate or ethanol, the activity of IDH declines drastically concomitant with its phosphorylation. The polypeptide is Isocitrate dehydrogenase kinase/phosphatase (Escherichia coli (strain SMS-3-5 / SECEC)).